Here is a 284-residue protein sequence, read N- to C-terminus: Efem/EfeO family lipoprotein (284 aa).

An N-terminal signal peptide occupies residues 1-17; sequence MKKLTTLLLASTLLIAA. C18 carries the N-palmitoyl cysteine lipid modification. C18 is lipidated: S-diacylglycerol cysteine.

Belongs to the EfeM/EfeO family.

Its subcellular location is the cell membrane. The polypeptide is Efem/EfeO family lipoprotein (Staphylococcus aureus (strain NCTC 8325 / PS 47)).